A 408-amino-acid polypeptide reads, in one-letter code: MAEPVGKRGRLSRGSGAGRRPRAQRSPSRGTLDVVSVDLVSDSDEEIVEVTSARCAADEVEVAPSEPPGPVASRDDSDSDSEGADARPAGPPREPVRRRRRLVLDPGEAPLVPVYSGKVKSSLCLIPDDLSLLKLYPPGDEEEVELADSSGLYHEGSPSPGSPWKTKLRTKDKEEKKKTEILDLDNSPLSPPSPRTKSRKHTRALKKLSEVNKRLQDLRSCLSPEPPQGQEQQGQEDEVVLVEGPTLPETPRLFPLKIRCRADLVRLPLRMSEPLQSVVDHMATHLGVSPSRILLLFGETELSPTATPRTLKLGVADIIDCVVLASSPEATETSRQLQLRVQGKEKHQTLEVSLSRDSPLKTLMSHYEEAMGLSGRKLSFFFDGTKLSGRELPADLGMESGDLIEVWG.

The segment at 1 to 113 is disordered; that stretch reads MAEPVGKRGR…LDPGEAPLVP (113 aa). Positions 24 to 40 are enriched in low complexity; it reads QRSPSRGTLDVVSVDLV. Residues Ser41, Ser43, Ser73, Ser77, Ser79, Ser81, and Ser116 each carry the phosphoserine modification. Glycyl lysine isopeptide (Lys-Gly) (interchain with G-Cter in SUMO2) cross-links involve residues Lys118 and Lys120. The segment at 141–205 is disordered; the sequence is EEEVELADSS…TKSRKHTRAL (65 aa). Positions 169–181 are enriched in basic and acidic residues; sequence RTKDKEEKKKTEI. Phosphoserine is present on residues Ser187, Ser190, and Ser193. Residues 196–205 are compositionally biased toward basic residues; sequence TKSRKHTRAL. Residues 197 to 220 adopt a coiled-coil conformation; it reads KSRKHTRALKKLSEVNKRLQDLRS. Ser209 and Ser303 each carry phosphoserine. Phosphothreonine is present on residues Thr305 and Thr307. Positions 337–408 constitute a Ubiquitin-like domain; it reads LQLRVQGKEK…ESGDLIEVWG (72 aa). Phosphoserine occurs at positions 358 and 379.

Interacts with NFATC2, TRAF1, TRAF2 and PRMT1. Interacts with UBE2I/UBC9. Methylation at the N-terminus by PRMT1 modulates interaction with the NFAT complex and results in augmented cytokine production.

It localises to the nucleus. It is found in the cytoplasm. Its function is as follows. In T-helper 2 (Th2) cells, regulates the magnitude of NFAT-driven transcription of a specific subset of cytokine genes, including IL3, IL4, IL5 and IL13, but not IL2. Recruits PRMT1 to the IL4 promoter; this leads to enhancement of histone H4 'Arg-3'-methylation and facilitates subsequent histone acetylation at the IL4 locus, thus promotes robust cytokine expression. Down-regulates formation of poly-SUMO chains by UBE2I/UBC9. This chain is NFATC2-interacting protein (NFATC2IP), found in Macaca fascicularis (Crab-eating macaque).